Reading from the N-terminus, the 350-residue chain is Serine-threonine kinase receptor-associated protein (350 aa).

7 WD repeats span residues 12–56 (GHTR…GTFL), 57–96 (GHKG…ELMT), 98–137 (AHKH…AEPK), 141–179 (GHTS…EVKS), 180–212 (LNFN…HSAV), 221–262 (EAPA…ESYK), and 263–302 (GHFG…TYGL). Ser-312, Ser-335, and Ser-338 each carry phosphoserine. Residues 326-350 (AEEELEEIASENSDSIYSSTPEVKA) are disordered. Positions 337–350 (NSDSIYSSTPEVKA) are enriched in polar residues. Tyr-342 bears the Phosphotyrosine mark.

The protein belongs to the WD repeat STRAP family. In terms of assembly, part of the core SMN complex that contains SMN1, GEMIN2/SIP1, DDX20/GEMIN3, GEMIN4, GEMIN5, GEMIN6, GEMIN7, GEMIN8 and STRAP/UNRIP. Part of the SMN-Sm complex that contains SMN1, GEMIN2/SIP1, DDX20/GEMIN3, GEMIN4, GEMIN5, GEMIN6, GEMIN7, GEMIN8, STRAP/UNRIP and the Sm proteins SNRPB, SNRPD1, SNRPD2, SNRPD3, SNRPE, SNRPF and SNRPG. Interacts directly with GEMIN6 and GEMIN7. Associates with the SMN complex in the cytoplasm but not in the nucleus. Also interacts with CSDE1/UNR and MAWBP. Interacts with PDPK1. Interacts with TRIM48.

The protein localises to the cytoplasm. The protein resides in the nucleus. In terms of biological role, the SMN complex catalyzes the assembly of small nuclear ribonucleoproteins (snRNPs), the building blocks of the spliceosome, and thereby plays an important role in the splicing of cellular pre-mRNAs. Most spliceosomal snRNPs contain a common set of Sm proteins SNRPB, SNRPD1, SNRPD2, SNRPD3, SNRPE, SNRPF and SNRPG that assemble in a heptameric protein ring on the Sm site of the small nuclear RNA to form the core snRNP (Sm core). In the cytosol, the Sm proteins SNRPD1, SNRPD2, SNRPE, SNRPF and SNRPG are trapped in an inactive 6S pICln-Sm complex by the chaperone CLNS1A that controls the assembly of the core snRNP. To assemble core snRNPs, the SMN complex accepts the trapped 5Sm proteins from CLNS1A forming an intermediate. Binding of snRNA inside 5Sm triggers eviction of the SMN complex, thereby allowing binding of SNRPD3 and SNRPB to complete assembly of the core snRNP. STRAP plays a role in the cellular distribution of the SMN complex. Negatively regulates TGF-beta signaling but positively regulates the PDPK1 kinase activity by enhancing its autophosphorylation and by significantly reducing the association of PDPK1 with 14-3-3 protein. The protein is Serine-threonine kinase receptor-associated protein (Strap) of Mus musculus (Mouse).